A 591-amino-acid chain; its full sequence is Isocitrate dehydrogenase kinase/phosphatase (591 aa).

Residues 322–328 (APGIRGL) and Lys-343 contribute to the ATP site. Residue Asp-378 is part of the active site.

The protein belongs to the AceK family.

The protein localises to the cytoplasm. The catalysed reaction is L-seryl-[isocitrate dehydrogenase] + ATP = O-phospho-L-seryl-[isocitrate dehydrogenase] + ADP + H(+). Functionally, bifunctional enzyme which can phosphorylate or dephosphorylate isocitrate dehydrogenase (IDH) on a specific serine residue. This is a regulatory mechanism which enables bacteria to bypass the Krebs cycle via the glyoxylate shunt in response to the source of carbon. When bacteria are grown on glucose, IDH is fully active and unphosphorylated, but when grown on acetate or ethanol, the activity of IDH declines drastically concomitant with its phosphorylation. The sequence is that of Isocitrate dehydrogenase kinase/phosphatase from Aromatoleum aromaticum (strain DSM 19018 / LMG 30748 / EbN1) (Azoarcus sp. (strain EbN1)).